A 471-amino-acid polypeptide reads, in one-letter code: ATP synthase subunit beta 1 (471 aa).

157 to 164 serves as a coordination point for ATP; the sequence is GGAGVGKT.

The protein belongs to the ATPase alpha/beta chains family. In terms of assembly, F-type ATPases have 2 components, CF(1) - the catalytic core - and CF(0) - the membrane proton channel. CF(1) has five subunits: alpha(3), beta(3), gamma(1), delta(1), epsilon(1). CF(0) has three main subunits: a(1), b(2) and c(9-12). The alpha and beta chains form an alternating ring which encloses part of the gamma chain. CF(1) is attached to CF(0) by a central stalk formed by the gamma and epsilon chains, while a peripheral stalk is formed by the delta and b chains.

It localises to the cell inner membrane. The enzyme catalyses ATP + H2O + 4 H(+)(in) = ADP + phosphate + 5 H(+)(out). In terms of biological role, produces ATP from ADP in the presence of a proton gradient across the membrane. The catalytic sites are hosted primarily by the beta subunits. The polypeptide is ATP synthase subunit beta 1 (Pelobacter propionicus (strain DSM 2379 / NBRC 103807 / OttBd1)).